The following is a 109-amino-acid chain: ATP-dependent Clp protease adapter protein ClpS (109 aa).

The disordered stretch occupies residues 1–25; it reads MSERKEGDSGAGVRSAVITQTKPKT.

Belongs to the ClpS family. In terms of assembly, binds to the N-terminal domain of the chaperone ClpA.

Functionally, involved in the modulation of the specificity of the ClpAP-mediated ATP-dependent protein degradation. This is ATP-dependent Clp protease adapter protein ClpS from Phenylobacterium zucineum (strain HLK1).